Here is a 741-residue protein sequence, read N- to C-terminus: Eukaryotic translation initiation factor 3 subunit B (741 aa).

Positions Met-1 to Glu-10 are enriched in polar residues. Residues Met-1 to Ile-21 are disordered. The 87-residue stretch at Thr-40 to Asp-126 folds into the RRM domain. 5 WD repeats span residues Ala-193 to Gln-230, Pro-232 to Val-289, Ala-303 to Lys-344, Ile-514 to Glu-557, and Val-572 to Ala-610. The segment at Asp-696–Ala-723 is disordered.

The protein belongs to the eIF-3 subunit B family. Component of the eukaryotic translation initiation factor 3 (eIF-3) complex.

Its subcellular location is the cytoplasm. In terms of biological role, RNA-binding component of the eukaryotic translation initiation factor 3 (eIF-3) complex, which is involved in protein synthesis of a specialized repertoire of mRNAs and, together with other initiation factors, stimulates binding of mRNA and methionyl-tRNAi to the 40S ribosome. The eIF-3 complex specifically targets and initiates translation of a subset of mRNAs involved in cell proliferation. The polypeptide is Eukaryotic translation initiation factor 3 subunit B (prt1) (Aspergillus oryzae (strain ATCC 42149 / RIB 40) (Yellow koji mold)).